A 624-amino-acid polypeptide reads, in one-letter code: Probable potassium transport system protein Kup 1 (624 aa).

Helical transmembrane passes span 10–30, 48–68, 94–114, 133–153, 159–179, 210–230, 242–262, 270–290, 331–351, 363–383, 388–408, and 413–433; these read LALG…LYAL, LSLI…MIIF, PVFY…GMLT, LYPY…SLQA, IGYL…ILGI, FLLG…ADIG, FFIA…NLIV, PFFM…ATVA, IYVP…CLAF, IAVN…AVSI, TFNV…FLGA, and FITG…IMYS.

It belongs to the HAK/KUP transporter (TC 2.A.72) family.

It is found in the cell inner membrane. It catalyses the reaction K(+)(in) + H(+)(in) = K(+)(out) + H(+)(out). Transport of potassium into the cell. Likely operates as a K(+):H(+) symporter. The polypeptide is Probable potassium transport system protein Kup 1 (Legionella pneumophila (strain Paris)).